A 200-amino-acid polypeptide reads, in one-letter code: Pyridoxal phosphate homeostasis protein (200 aa).

K11 is modified (N6-(pyridoxal phosphate)lysine).

It belongs to the pyridoxal phosphate-binding protein YggS/PROSC family. Monomer.

Its function is as follows. Pyridoxal 5'-phosphate (PLP)-binding protein, which is involved in PLP homeostasis. The chain is Pyridoxal phosphate homeostasis protein from Buchnera aphidicola subsp. Acyrthosiphon pisum (strain APS) (Acyrthosiphon pisum symbiotic bacterium).